A 2105-amino-acid chain; its full sequence is MAFTYRNPLEIAINKLPSKQSDQLLSLTTDEIEKTLEVTNRFFSFSITPEDQELLTKHGLTLAPIGFKSHSHPISKMIENHLLYICVPSLLSSFKSVAFFSLRENKVDSFLKMHSVFSHGKIKSLGMYNAIIDGKDKYRYGDVEFSSFRDRVIGLRDQCLTRNKFPKVLFLHDELHFLSPFDMAFLFETIPEIDRVVATTVFPIELLFGDKVSKEPRVYTYKVHGSSFSFYPDGVASECYEQNLANSKWPFTCSGIQWANRKIRVTKLQSLFAHHVFSFDRGRACNEFNHFDKPSCLLAEEMRLLTKRFDKAVINRSTVSSLSTYMACLKTANAASAVAKLRQLEKRDLYPDELNFVYSFGEHFKNFGMRDDFDVSVLQWVKDKFCQVMPHFIAASFFEPTEFHLNMRKLLNDLATKGIEVPLSVIILDKVNFIETRFHARMFDIAQAIGVNLDLLGKRFDYEAESEEYFSENGYIFMPSKSNPERNWILNSGSLKIDYSRLVRARRFRLRRDFLDPISKGKSPRKQLFLESTGNIKSNPNAEKNSESGEIKIEGSAENDQPHEVSHTSMETEDGQGFEGSIPVDLINCFEPEEIKLPKRRRKNDCVFKAISAHLGIDSQDLLNFLVNEDISDELLDCIEEDKGLSHEMIEEVLITKGLSMVYTSDFKEMAVLNRKYGVNGKMYCTIKGNHCELSSKECFIRLLKEGGEAQMSNENLNADSLFDLGRFVHNRDRAVKLAKSMARGTTGLLNEFDLEFCKNMVTLSELFPENFSSVVGLRLGFAGSGKTHKVLQWINYTPSVKRMFISPRRMLADEVEPQLKGTACQVHTWETALKKIDGTFMEVFVDEIGLYPPGYLTLLQMCAFRKIVKGQSENFLKGKLLELSKTCLNIRCFGDPLQLRYYSAEDTNLLDKTHDIDLMIKTIKHKYLFQGYRFGQWFQELVNMPTRVDESKFSRKFFADISSVKTEDYGLILVAKREDKGVFAGRVPVATVSESQGMTISKRVLICLDQNLFAGGANAAIVAITRSKVGFDFILKGNSLKEVQRMAQKTIWQFIIEGKSIPMERIVNMNPGASFYESPLDVGNSSIQDKASNDLFIMPFINLAEEEVDPEEVVGDVIQPVEWFKCHVPVFDTDPTLAEIFDKVAAKEKREFQSVLGLSNQFLDMEKNGCKIDILPFARQNVFPHHQASDDVTFWAGVQKRIRKSNWRREKSKFEEFESQGKELLQEFISMLPFEFKVNIKEIEDGEKSFLEKRKLKSEKMWANHSERSDIDWKLDHAFLFMKSQYCTKEGKMFTEAKAGQTLACFQHIVLFRFGPMLRAIESAFLRSCGDSYYIHSGKNFFCLDSFVTKNASVFDGFSIESDYTAFDSSQDHVILAFEMALLQYLGVSKEFQLDYLRLKLTLGCRLGSLAIMRFTGEFCTFLFNTFANMLFTQLKYKIDPRRHRILFAGDDMCSLSSLKRRRGERATRLMKSFSLTAVEEVRKFPMFCGWYLSPYGIIKSPKLLWARIKMMSERQLLKECVDNYLFEAIFAYRLGERLYTILKEEDFEYHYLVIRFFVRNSKLLTGLSKSLIFEIGEGIGSKWLSSTSTASSRRSNLQTSKLMLSRPQSFTRMQPFSNQTCLIASKGLNQTSRFPLDLVTASSCLISNCLMTPKLIQSGRKATSTNTYTMESSWLGSKQCCQTLEAWKGESLYMMEPAWIRKEATFARIFSSLSLTVATLVSGQSTVCLPQTQIWPKGLDFVWTLIVHNMNRTLSCLLLTLELHTDASTLQGFWKPKLAIQDGLHRQSAAVKHLNSMRKSRWPSWIADPRCFWKKVHQTCTLKRDCSEVTRLEGHAQFPLKGGQTQGCKKREDLGPSRLELKDLEKMSLEDVLQQARRHRVGVYLWKTHIDPAKELLTVPPPEGFKEGESFEGKELYLLLCNHYCKYLFGNIAVFGSSDKTQFPAVGFDTPPVHYNLTTTPKEGETDEGRKARAGSSGEKTKIWRIDLSNVVPELKTFAATSRQNSLNECTFRKLCEPFADLAREFLHERWSKGLATNIYKKWPKAFEKSPWVAFDFATGLKMNRLTPDEKQVIDRMTKRLFRTEGQKGVFEAGSESNLELEG.

The region spanning 63–250 is the Alphavirus-like MT domain; the sequence is APIGFKSHSH…EQNLANSKWP (188 aa). Disordered regions lie at residues 529 to 548 and 555 to 577; these read FLES…NSES and GSAE…DGQG. Over residues 530–543 the composition is skewed to polar residues; the sequence is LESTGNIKSNPNAE. Basic and acidic residues predominate over residues 555–566; it reads GSAENDQPHEVS. Residues 753 to 929 enclose the (+)RNA virus helicase ATP-binding domain; it reads FDLEFCKNMV…MIKTIKHKYL (177 aa). Residue 781 to 788 participates in ATP binding; that stretch reads GFAGSGKT. Residues 930 to 1067 form the (+)RNA virus helicase C-terminal domain; it reads FQGYRFGQWF…EGKSIPMERI (138 aa). The 109-residue stretch at 1358-1466 folds into the RdRp catalytic domain; sequence GFSIESDYTA…LSSLKRRRGE (109 aa). Residues 1585-1868 are V-region; it reads WLSSTSTASS…SRLELKDLEK (284 aa). Positions 1960–1979 are disordered; sequence TTTPKEGETDEGRKARAGSS. Residues 1964–1973 are compositionally biased toward basic and acidic residues; the sequence is KEGETDEGRK.

In terms of processing, the N-terminus of the coat protein is blocked.

It is found in the virion. The enzyme catalyses RNA(n) + a ribonucleoside 5'-triphosphate = RNA(n+1) + diphosphate. The catalysed reaction is ATP + H2O = ADP + phosphate + H(+). Its function is as follows. Replicates genomic RNA, and might as well transcribe a subgenomic RNA coding for coat protein. Functionally, coat protein: encapsidates the viral genome. Forms particles of very flexuous filaments, 619 nm long and 12 nm in width, with obvious cross-banding, helical symmetry and a pitch of c. 3.8 nm. Synthesis remains unclear: either by cleavage of the ORF1 polyprotein, or by translation of a subgenomic RNA. The chain is Genome polyprotein from Apple stem grooving virus (strain P-209) (ASGV).